A 662-amino-acid chain; its full sequence is Glutathione hydrolase 7 (662 aa).

The Cytoplasmic segment spans residues 1-106; the sequence is MAAENEASQE…AAECSCRQDG (106 aa). 4 positions are modified to phosphoserine: Ser-17, Ser-72, Ser-79, and Ser-83. The segment at 26–90 is disordered; sequence SFPRLPEDEP…DGSPLRETRK (65 aa). Over residues 72–83 the composition is skewed to low complexity; it reads SSSSEMGSQDGS. A helical; Signal-anchor for type II membrane protein transmembrane segment spans residues 107 to 127; it reads LTVIVTACLTFATGVTVALVM. Residues 128 to 662 are Extracellular-facing; it reads QIYFGDPQIF…SPDAAGATIL (535 aa). 10 N-linked (GlcNAc...) asparagine glycosylation sites follow: Asn-198, Asn-267, Asn-283, Asn-330, Asn-353, Asn-394, Asn-452, Asn-519, Asn-523, and Asn-586.

It belongs to the gamma-glutamyltransferase family. As to quaternary structure, interacts with TLCD3A. Heterodimer composed of the light and heavy chains. The active site is located in the light chain. Cleaved by autocatalysis into a large and a small subunit and the autocatalytic cleavage is essential to the functional activation of the enzyme. Widely expressed, but at low level, except in the airway epithelial cells. Detected in brain, heart, kidney, liver, lung, spleen, testis and trachea.

The protein resides in the membrane. The catalysed reaction is an N-terminal (5-L-glutamyl)-[peptide] + an alpha-amino acid = 5-L-glutamyl amino acid + an N-terminal L-alpha-aminoacyl-[peptide]. The enzyme catalyses glutathione + H2O = L-cysteinylglycine + L-glutamate. It carries out the reaction an S-substituted glutathione + H2O = an S-substituted L-cysteinylglycine + L-glutamate. It participates in sulfur metabolism; glutathione metabolism. In terms of biological role, hydrolyzes and transfers gamma-glutamyl moieties from glutathione and other gamma-glutamyl compounds to acceptors. The polypeptide is Glutathione hydrolase 7 (Homo sapiens (Human)).